We begin with the raw amino-acid sequence, 375 residues long: Putative glutamate--cysteine ligase 2 (375 aa).

The protein belongs to the glutamate--cysteine ligase type 2 family. YbdK subfamily.

It carries out the reaction L-cysteine + L-glutamate + ATP = gamma-L-glutamyl-L-cysteine + ADP + phosphate + H(+). In terms of biological role, ATP-dependent carboxylate-amine ligase which exhibits weak glutamate--cysteine ligase activity. The protein is Putative glutamate--cysteine ligase 2 of Azoarcus sp. (strain BH72).